The chain runs to 289 residues: DNA repair protein rad14 (289 aa).

4 residues coordinate Zn(2+): C116, C119, C137, and C140. Residues 116-140 fold into a zinc finger; sequence CFECDSIELDTKYFDIFHCRVCHTC.

It belongs to the XPA family. As to quaternary structure, interacts with hrq1.

It is found in the nucleus. In terms of biological role, involved in nucleotide excision repair (NER). Functional in repair of ultraviolet radiation induced damages and in mitotic mutation avoidance. Binds damaged DNA. Binds specifically to base-base mismatches or small insertion/deletion loops with unpaired nucleotides. Maintains GT repeat stability. Functions as a part of the short-patch excision repair system. This chain is DNA repair protein rad14, found in Schizosaccharomyces pombe (strain 972 / ATCC 24843) (Fission yeast).